The chain runs to 244 residues: NAD reductase coq12 (244 aa).

Positions 131–158 (NPLMNSEKNSTSVEDLPGSNRTQQTSSH) are disordered. The span at 132 to 158 (PLMNSEKNSTSVEDLPGSNRTQQTSSH) shows a compositional bias: polar residues.

Its subcellular location is the mitochondrion. The catalysed reaction is a reduced flavin + NAD(+) = an oxidized flavin + NADH + 2 H(+). Functionally, NADH-dependent flavin reductase that acts in the coenzyme Q biosynthetic pathway. Required for synthesis of the p-hydroxybenzoic acid (PHB) precursor to form a quinone backbone. The protein is NAD reductase coq12 of Schizosaccharomyces pombe (strain 972 / ATCC 24843) (Fission yeast).